Reading from the N-terminus, the 95-residue chain is Co-chaperonin GroES (95 aa).

The protein belongs to the GroES chaperonin family. As to quaternary structure, heptamer of 7 subunits arranged in a ring. Interacts with the chaperonin GroEL.

It localises to the cytoplasm. Its function is as follows. Together with the chaperonin GroEL, plays an essential role in assisting protein folding. The GroEL-GroES system forms a nano-cage that allows encapsulation of the non-native substrate proteins and provides a physical environment optimized to promote and accelerate protein folding. GroES binds to the apical surface of the GroEL ring, thereby capping the opening of the GroEL channel. The polypeptide is Co-chaperonin GroES (Xylella fastidiosa (strain M12)).